Reading from the N-terminus, the 340-residue chain is Entry-fusion complex protein OPG094 (340 aa).

The disordered stretch occupies residues 1 to 20 (MGGGVSVELPKRDPPPGVPT). Glycine 2 carries the N-myristoyl glycine; by host lipid modification. Residues 2 to 319 (GGGVSVELPK…VQHNIKHSFD (318 aa)) are Virion surface-facing. The helical; Signal-anchor for type II membrane protein transmembrane segment at 320–340 (LKLHLISLLSLLVIWILIVAI) threads the bilayer.

This sequence belongs to the orthopoxvirus OPG086 family. Interacts with OPG143. Component of the entry fusion complex (EFC) composed of OPG053, OPG076, OPG086, OPG094, OPG095, OPG099, OPG107, OPG143, OPG104, OPG147 and OPG155. Except for OPG095 and OPG053, each of the EFC proteins is required for assembly or stability of the complex. In terms of processing, unglycosylated because produced in viral factories instead of the classic ER -Golgi route.

It is found in the virion membrane. In terms of biological role, component of the entry fusion complex (EFC), which consists of 11 proteins. During cell infection, this complex mediates entry of the virion core into the host cytoplasm by a two-step mechanism consisting of lipid mixing of the viral and cellular membranes and subsequent pore formation. In Vaccinia virus (strain Copenhagen) (VACV), this protein is Entry-fusion complex protein OPG094 (OPG094).